A 150-amino-acid polypeptide reads, in one-letter code: Endoribonuclease YbeY (150 aa).

Positions 116, 120, and 126 each coordinate Zn(2+).

It belongs to the endoribonuclease YbeY family. Zn(2+) serves as cofactor.

The protein resides in the cytoplasm. Single strand-specific metallo-endoribonuclease involved in late-stage 70S ribosome quality control and in maturation of the 3' terminus of the 16S rRNA. This is Endoribonuclease YbeY from Mesomycoplasma hyopneumoniae (strain 232) (Mycoplasma hyopneumoniae).